Reading from the N-terminus, the 132-residue chain is Agouti-signaling protein (132 aa).

The signal sequence occupies residues 1-22 (MDVTRLLLATLLVFLCFFTAYS). N-linked (GlcNAc...) asparagine glycosylation is present at N39. The tract at residues 61–87 (QISRKEAEKKRSSKKEASMKKVARPRT) is disordered. Over residues 63–79 (SRKEAEKKRSSKKEASM) the composition is skewed to basic and acidic residues. 5 disulfide bridges follow: C93–C108, C100–C114, C107–C125, C111–C132, and C116–C123. The Agouti domain maps to 93–132 (CVATRDSCKPPAPACCDPCAFCQCRFFRSACSCRVLSLNC).

It is found in the secreted. In terms of biological role, involved in the regulation of melanogenesis. The binding of ASP to MC1R precludes alpha-MSH initiated signaling and thus blocks production of cAMP, leading to a down-regulation of eumelanogenesis (brown/black pigment) and thus increasing synthesis of pheomelanin (yellow/red pigment). This chain is Agouti-signaling protein (ASIP), found in Macaca hecki (Heck's macaque).